The chain runs to 548 residues: Kinetochore and Eb1-associated basic protein (548 aa).

Disordered stretches follow at residues 1–51 and 82–181; these read MSSM…PKHP and YRSS…IRPK. Composition is skewed to basic and acidic residues over residues 20 to 29, 104 to 116, and 127 to 141; these read RTKELLERQR, RTWE…EFRS, and PRPR…DLRS. The important for kinetochore and microtubule localization stretch occupies residues 100–253; sequence QNRQRTWEGP…TTSKRKLDFK (154 aa). Positions 144-155 are enriched in polar residues; sequence QGTPATKIPSQR. The SXIP motif 1 signature appears at 149–152; sequence TKIP. A compositionally biased stretch (basic and acidic residues) spans 156-165; the sequence is NPKENQELSK. Residues 166-175 are compositionally biased toward polar residues; the sequence is SHTCIPSSEP. The SXIP motif 2 signature appears at 168-171; it reads TCIP. Positions 237–372 are CH (calponin-homology)-like region, which is not required for kinetochore and microtubule localization; it reads SDKGIKLTTS…MCALPVVSEK (136 aa). Positions 386–457 form a coiled coil; that stretch reads YDVMSLQQKF…LQLQRLRLQE (72 aa).

Interacts with Eb1 via the two SxIP motifs; the interaction is not required for kebab kinetochore localization.

It localises to the cytoplasm. The protein localises to the perinuclear region. The protein resides in the chromosome. Its subcellular location is the centromere. It is found in the kinetochore. It localises to the cytoskeleton. The protein localises to the spindle. The sequence is that of Kinetochore and Eb1-associated basic protein from Drosophila melanogaster (Fruit fly).